Reading from the N-terminus, the 181-residue chain is MTNSSEKQWERIQQLEKEHVEVYRELLITLDRLYLIRKHNHAVILSHTQQRLLEIRHQLQINLEKTALLIRLLEKPDNTNVLFTKLQNLLEESNSLDYELLQSLGAQSSLHKQLIESRAERDELMSKLIELSSKFPKPTIPPDDSDTAGKQVEVEKENETIQELMIALQIHSGYTNISYTI.

Residues 112–171 (KQLIESRAERDELMSKLIELSSKFPKPTIPPDDSDTAGKQVEVEKENETIQELMIALQIH) adopt a coiled-coil conformation.

It belongs to the CENP-H/MCM16 family. In terms of assembly, component of the heterotrimeric kinetochore subcomplex CTF3, which consists of CTF3, MCM16 and MCM22. The CTF3 subcomplex is part of a larger constitutive centromere-associated network (CCAN) (also known as central kinetochore CTF19 complex in yeast), which is composed of at least AME1, CHL4, CNN1, CTF3, CTF19, IML3, MCM16, MCM21, MCM22, MHF1, MHF2, MIF2, NKP1, NKP2, OKP1 and WIP1. Interacts with CTF19.

Its subcellular location is the nucleus. The protein resides in the chromosome. It localises to the centromere. It is found in the kinetochore. Component of the kinetochore, a multiprotein complex that assembles on centromeric DNA and attaches chromosomes to spindle microtubules, mediating chromosome segregation and sister chromatid segregation during meiosis and mitosis. Component of the inner kinetochore constitutive centromere-associated network (CCAN), which serves as a structural platform for outer kinetochore assembly. The polypeptide is Inner kinetochore subunit MCM16 (MCM16) (Saccharomyces cerevisiae (strain ATCC 204508 / S288c) (Baker's yeast)).